An 89-amino-acid chain; its full sequence is MTVLTSYKLYCGPDFPAPLEKKEKREKGKIRNISFLIVLTKGPIWKVSSMESTSYNGCIENLDCKFRKSFIEEIIAYEGFGKYIEVINF.

This is an uncharacterized protein from Schizosaccharomyces pombe (strain 972 / ATCC 24843) (Fission yeast).